The chain runs to 158 residues: MERLIFVSFGLLVVILSLSGTGADFDCIPGWSAYDRYCYQAFSKPKNWEDAESFCEEGVKTSHLVSIESSGEGDFVAQLVAEKIKTSFQYVWIGLRIQNKEQQCRSEWSDASSVNYENLVKQFSKKCYALKKGTELRTWFNVYCGTENPFVCKYTPEC.

Residues Met1 to Ala23 form the signal peptide. 3 disulfide bridges follow: Cys27–Cys38, Cys55–Cys152, and Cys127–Cys144. Residues Tyr34–Lys153 enclose the C-type lectin domain.

It belongs to the snaclec family. As to quaternary structure, tetramer of heterodimers of alpha and beta subunits (alphabeta)(4); disulfide-linked. As to expression, expressed by the venom gland.

Its subcellular location is the secreted. Functionally, strong platelet aggregation inhibitor. Binds specifically to platelet glycoprotein Ibalpha (GP1BA) with high affinity and inhibits vWF-dependent platelet aggregation. Has also been observed to induce small agglutinates in washed platelets by binding to GPIb. This Protobothrops flavoviridis (Habu) protein is Snaclec flavocetin-A subunit alpha.